The chain runs to 4481 residues: Dynein axonemal heavy chain 17 (4481 aa).

The segment at 1–1792 (MPDLRIDYLE…FANICDAQIK (1792 aa)) is stem. A Kelch 1 repeat occupies 521–569 (LLYMCGGLLERPLILVEVVPRYSVMLEMFNTELDNAKLMYDAQMAASAD). The stretch at 759-826 (ENVMEYIQEM…GRVANLNKRY (68 aa)) forms a coiled coil. TPR repeat units lie at residues 1533–1566 (VVEATNKPDLYNKLENLKMSLAVCEKALAEYLET) and 1688–1722 (IWWTTEVGLAFARLEEGYENAIKDYNKKQISQLNA). 4 AAA regions span residues 1793 to 2014 (YSYE…VLVV), 2074 to 2295 (KIIK…IGFK), 2401 to 2649 (ELDP…IFQG), and 2747 to 2996 (SYNE…ERRY). Residues 1831 to 1838 (GPAGTGKT) and 2112 to 2119 (GNAGSGKS) each bind ATP. A Kelch 2 repeat occupies 2229 to 2275 (ISHLRTATPATVSRAGILYINPADLGWNPVVSSWIERRKVQSEKANL). ATP is bound by residues 2439–2446 (GNAGTGKS) and 2785–2792 (GVGGSGKQ). A Kelch 3 repeat occupies 2782–2834 (LLVGVGGSGKQSLSRLAAYISALDVFQITLKKGYAIPDLKMDLATQYIKSAVK). 2 coiled-coil regions span residues 3011-3071 (YQNL…IQVV) and 3241-3293 (DVAP…EKIK). The interval 3011–3297 (YQNLLAKKRM…TAEKIKCQQE (287 aa)) is stalk. AAA regions lie at residues 3389–3616 (LTDD…EIEE) and 3826–4059 (VKNF…VLYN). Residues 4138–4173 (PESPYLYGLHPNAEIGFLTVTSEKLFRTVLEMQPKE) form a TPR 3 repeat. 2 Kelch repeats span residues 4272-4321 (NLGL…DLLQ) and 4339-4385 (VWLA…DMTA).

It belongs to the dynein heavy chain family. Consists of at least two heavy chains and a number of intermediate and light chains.

The protein localises to the cytoplasm. It is found in the cytoskeleton. Its subcellular location is the flagellum axoneme. Its function is as follows. Force generating protein component of the outer dynein arms (ODAs) in the sperm flagellum. Produces force towards the minus ends of microtubules. Dynein has ATPase activity; the force-producing power stroke is thought to occur on release of ADP. Plays a major role in sperm motility, implicated in sperm flagellar assembly and beating. The polypeptide is Dynein axonemal heavy chain 17 (Mus musculus (Mouse)).